We begin with the raw amino-acid sequence, 2278 residues long: Protein Ycf2 (2278 aa).

The protein belongs to the Ycf2 family.

It is found in the plastid. The protein localises to the chloroplast stroma. It localises to the chromoplast stroma. Functionally, probable ATPase of unknown function. Its presence in a non-photosynthetic plant (Epifagus virginiana) and experiments in tobacco indicate that it has an essential function which is probably not related to photosynthesis. This Solanum lycopersicum (Tomato) protein is Protein Ycf2 (ycf2-A).